We begin with the raw amino-acid sequence, 790 residues long: Valine--tRNA ligase (790 aa).

The 'HIGH' region motif lies at 40-50; sequence PTVSGKMHMGH. Residues 521–525 carry the 'KMSKS' region motif; it reads KMSKS. K524 is an ATP binding site.

It belongs to the class-I aminoacyl-tRNA synthetase family. ValS type 2 subfamily.

The protein resides in the cytoplasm. The catalysed reaction is tRNA(Val) + L-valine + ATP = L-valyl-tRNA(Val) + AMP + diphosphate. Catalyzes the attachment of valine to tRNA(Val). As ValRS can inadvertently accommodate and process structurally similar amino acids such as threonine, to avoid such errors, it has a 'posttransfer' editing activity that hydrolyzes mischarged Thr-tRNA(Val) in a tRNA-dependent manner. This Thermoplasma volcanium (strain ATCC 51530 / DSM 4299 / JCM 9571 / NBRC 15438 / GSS1) protein is Valine--tRNA ligase.